A 424-amino-acid chain; its full sequence is Histidine--tRNA ligase (424 aa).

This sequence belongs to the class-II aminoacyl-tRNA synthetase family. As to quaternary structure, homodimer.

Its subcellular location is the cytoplasm. It catalyses the reaction tRNA(His) + L-histidine + ATP = L-histidyl-tRNA(His) + AMP + diphosphate + H(+). In Salmonella agona (strain SL483), this protein is Histidine--tRNA ligase.